Here is a 261-residue protein sequence, read N- to C-terminus: MIHSKKLTLGICLVLLIILIGGCVIMTKTNGRNAQIKENFNKTLSVYLTKNLDDFYDKEGFRDQEFDKRDKGTWIIYSEMVIEPKGKNMESRGMVLYINRNTRTTKGNFIVTEITEDSKGYSRSKEKKYPVKMENNRIIPTKPIPDDKLKKEIENFKFFVQYGNFKDFKDYKNGDISYNPNVPSYSAKYQLNNDDYNVQQLRKRYHIPTKQAPELKLKGSGNLKGSSVGSKDLEFTFVENQEENIYFSDSVEFTPSEDDKS.

Residues 1–22 (MIHSKKLTLGICLVLLIILIGG) form the signal peptide. The N-palmitoyl cysteine moiety is linked to residue C23. C23 is lipidated: S-diacylglycerol cysteine.

Belongs to the staphylococcal tandem lipoprotein family.

The protein localises to the cell membrane. This is an uncharacterized protein from Staphylococcus aureus (strain NCTC 8325 / PS 47).